The following is a 302-amino-acid chain: 4-hydroxy-tetrahydrodipicolinate synthase (302 aa).

Residue Thr-55 coordinates pyruvate. The active-site Proton donor/acceptor is the Tyr-144. Residue Lys-172 is the Schiff-base intermediate with substrate of the active site. Val-214 is a binding site for pyruvate.

This sequence belongs to the DapA family. Homotetramer; dimer of dimers.

The protein resides in the cytoplasm. It catalyses the reaction L-aspartate 4-semialdehyde + pyruvate = (2S,4S)-4-hydroxy-2,3,4,5-tetrahydrodipicolinate + H2O + H(+). It participates in amino-acid biosynthesis; L-lysine biosynthesis via DAP pathway; (S)-tetrahydrodipicolinate from L-aspartate: step 3/4. In terms of biological role, catalyzes the condensation of (S)-aspartate-beta-semialdehyde [(S)-ASA] and pyruvate to 4-hydroxy-tetrahydrodipicolinate (HTPA). In Prochlorococcus marinus (strain MIT 9313), this protein is 4-hydroxy-tetrahydrodipicolinate synthase.